Reading from the N-terminus, the 140-residue chain is Phosphopantetheine adenylyltransferase (140 aa).

Residue Ser9 participates in substrate binding. Residues 9–10 (SF) and His17 each bind ATP. Substrate is bound by residues Lys41, Thr74, and Arg88. ATP contacts are provided by residues 89 to 91 (GLR), Glu99, and 124 to 130 (KRSLSST).

It belongs to the bacterial CoaD family. Homohexamer. It depends on Mg(2+) as a cofactor.

The protein localises to the cytoplasm. It carries out the reaction (R)-4'-phosphopantetheine + ATP + H(+) = 3'-dephospho-CoA + diphosphate. It participates in cofactor biosynthesis; coenzyme A biosynthesis; CoA from (R)-pantothenate: step 4/5. In terms of biological role, reversibly transfers an adenylyl group from ATP to 4'-phosphopantetheine, yielding dephospho-CoA (dPCoA) and pyrophosphate. The chain is Phosphopantetheine adenylyltransferase from Mycoplasma capricolum subsp. capricolum (strain California kid / ATCC 27343 / NCTC 10154).